The primary structure comprises 149 residues: D-aminoacyl-tRNA deacylase (149 aa).

Positions 137 to 138 match the Gly-cisPro motif, important for rejection of L-amino acids motif; sequence GP.

Belongs to the DTD family. Homodimer.

It is found in the cytoplasm. The catalysed reaction is glycyl-tRNA(Ala) + H2O = tRNA(Ala) + glycine + H(+). It carries out the reaction a D-aminoacyl-tRNA + H2O = a tRNA + a D-alpha-amino acid + H(+). An aminoacyl-tRNA editing enzyme that deacylates mischarged D-aminoacyl-tRNAs. Also deacylates mischarged glycyl-tRNA(Ala), protecting cells against glycine mischarging by AlaRS. Acts via tRNA-based rather than protein-based catalysis; rejects L-amino acids rather than detecting D-amino acids in the active site. By recycling D-aminoacyl-tRNA to D-amino acids and free tRNA molecules, this enzyme counteracts the toxicity associated with the formation of D-aminoacyl-tRNA entities in vivo and helps enforce protein L-homochirality. This Syntrophotalea carbinolica (strain DSM 2380 / NBRC 103641 / GraBd1) (Pelobacter carbinolicus) protein is D-aminoacyl-tRNA deacylase.